The following is a 321-amino-acid chain: tRNA-dihydrouridine synthase B (321 aa).

FMN contacts are provided by residues 16 to 18 and Gln70; that span reads PMA. Cys100 acts as the Proton donor in catalysis. Residues Lys139, 200–202, and 224–225 each bind FMN; these read NGD and GR.

This sequence belongs to the Dus family. DusB subfamily. Requires FMN as cofactor.

It carries out the reaction a 5,6-dihydrouridine in tRNA + NAD(+) = a uridine in tRNA + NADH + H(+). The catalysed reaction is a 5,6-dihydrouridine in tRNA + NADP(+) = a uridine in tRNA + NADPH + H(+). In terms of biological role, catalyzes the synthesis of 5,6-dihydrouridine (D), a modified base found in the D-loop of most tRNAs, via the reduction of the C5-C6 double bond in target uridines. This is tRNA-dihydrouridine synthase B from Klebsiella pneumoniae.